The chain runs to 174 residues: MRCPICHFPETDVIDTRKLYEGEVIRRRRKCRACGRRFTTYERIESVSLMVVKKDGTREPYDREKIARGVRTACYRRPVSADAIEQLVNEVETAVMATDQQEISSQFIGDAVMRRLRDLDEVAYIRFASVYRSFADIGKLREAVDELLEREGTRNGHSSAATTDQGTTDNHSRM.

A zinc finger spans residues Cys-3 to Cys-34. The ATP-cone domain maps to Leu-49 to Lys-139. Residues Glu-151–Met-174 are disordered. Polar residues predominate over residues Asn-155–Met-174.

This sequence belongs to the NrdR family. It depends on Zn(2+) as a cofactor.

Its function is as follows. Negatively regulates transcription of bacterial ribonucleotide reductase nrd genes and operons by binding to NrdR-boxes. The sequence is that of Transcriptional repressor NrdR from Chloroflexus aggregans (strain MD-66 / DSM 9485).